Consider the following 467-residue polypeptide: Sexual differentiation process putative subtilase-type proteinase isp6 (467 aa).

The 91-residue stretch at 86-176 (YIIVLQPDLS…AVERDQVVSI (91 aa)) folds into the Inhibitor I9 domain. Residues 186–467 (PWGLARISHK…NLLAFNGAQE (282 aa)) form the Peptidase S8 domain. Residues Asp221, His253, and Ser409 each act as charge relay system in the active site.

Belongs to the peptidase S8 family.

In Schizosaccharomyces pombe (strain 972 / ATCC 24843) (Fission yeast), this protein is Sexual differentiation process putative subtilase-type proteinase isp6 (isp6).